We begin with the raw amino-acid sequence, 212 residues long: 3-isopropylmalate dehydratase small subunit (212 aa).

This sequence belongs to the LeuD family. LeuD type 1 subfamily. As to quaternary structure, heterodimer of LeuC and LeuD.

It carries out the reaction (2R,3S)-3-isopropylmalate = (2S)-2-isopropylmalate. It participates in amino-acid biosynthesis; L-leucine biosynthesis; L-leucine from 3-methyl-2-oxobutanoate: step 2/4. Functionally, catalyzes the isomerization between 2-isopropylmalate and 3-isopropylmalate, via the formation of 2-isopropylmaleate. The protein is 3-isopropylmalate dehydratase small subunit of Beutenbergia cavernae (strain ATCC BAA-8 / DSM 12333 / CCUG 43141 / JCM 11478 / NBRC 16432 / NCIMB 13614 / HKI 0122).